Consider the following 196-residue polypeptide: NADPH:quinone oxidoreductase (196 aa).

Belongs to the SsuE family. Homotetramer. It depends on FMN as a cofactor.

The protein localises to the cell membrane. It carries out the reaction a quinone + NADH + H(+) = a quinol + NAD(+). It catalyses the reaction a quinone + NADPH + H(+) = a quinol + NADP(+). The enzyme apparently serves as a quinone reductase in connection with conjugation reactions of hydroquinones involved in detoxification pathways. This chain is NADPH:quinone oxidoreductase (NQR), found in Arabidopsis thaliana (Mouse-ear cress).